Reading from the N-terminus, the 133-residue chain is Large ribosomal subunit protein bL12 (133 aa).

It belongs to the bacterial ribosomal protein bL12 family. Homodimer. Part of the ribosomal stalk of the 50S ribosomal subunit. Forms a multimeric L10(L12)X complex, where L10 forms an elongated spine to which 2 to 4 L12 dimers bind in a sequential fashion. Binds GTP-bound translation factors.

Functionally, forms part of the ribosomal stalk which helps the ribosome interact with GTP-bound translation factors. Is thus essential for accurate translation. The polypeptide is Large ribosomal subunit protein bL12 (Ehrlichia chaffeensis (strain ATCC CRL-10679 / Arkansas)).